Here is a 694-residue protein sequence, read N- to C-terminus: Prolyl 3-hydroxylase 2 (694 aa).

Positions M1–G23 are cleaved as a signal peptide. TPR repeat units follow at residues F35 to L68, R136 to H169, H196 to E229, and P292 to D325. Positions K386 to T418 form a coiled coil. Residues H395 to E427 form a disordered region. Residues N446 and N535 are each glycosylated (N-linked (GlcNAc...) asparagine). The region spanning T543 to L657 is the Fe2OG dioxygenase domain. Positions 566, 568, and 638 each coordinate Fe cation. R648 is an active-site residue. Residues K691–L694 carry the Prevents secretion from ER motif.

The protein belongs to the leprecan family. Fe cation serves as cofactor. L-ascorbate is required as a cofactor.

The protein resides in the endoplasmic reticulum. It localises to the sarcoplasmic reticulum. It is found in the golgi apparatus. It catalyses the reaction L-prolyl-[collagen] + 2-oxoglutarate + O2 = trans-3-hydroxy-L-prolyl-[collagen] + succinate + CO2. Functionally, prolyl 3-hydroxylase that catalyzes the post-translational formation of 3-hydroxyproline on collagens. Contributes to proline 3-hydroxylation of collagen COL4A1 and COL1A1 in tendons, the eye sclera and in the eye lens capsule. Has high activity with the type IV collagen COL4A1, and lower activity with COL1A1. Catalyzes hydroxylation of the first Pro in Gly-Pro-Hyp sequences where Hyp is 4-hydroxyproline. Has no activity on substrates that lack 4-hydroxyproline in the third position. The chain is Prolyl 3-hydroxylase 2 from Gallus gallus (Chicken).